A 799-amino-acid chain; its full sequence is Dipeptidyl peptidase family member 1 (799 aa).

Residues methionine 1–alanine 31 lie on the Cytoplasmic side of the membrane. A helical; Signal-anchor for type II membrane protein membrane pass occupies residues isoleucine 32–leucine 52. Topologically, residues phenylalanine 53–lysine 799 are lumenal. Asparagine 64, asparagine 138, asparagine 267, and asparagine 335 each carry an N-linked (GlcNAc...) asparagine glycan. Cysteine 474 and cysteine 477 are oxidised to a cystine. A glycan (N-linked (GlcNAc...) asparagine) is linked at asparagine 481. Residues cysteine 482 and cysteine 500 are joined by a disulfide bond. Asparagine 512 is a glycosylation site (N-linked (GlcNAc...) asparagine). Residues serine 669, aspartate 742, and histidine 774 each act as charge relay system in the active site. Cysteine 689 and cysteine 794 are joined by a disulfide.

This sequence belongs to the peptidase S9B family. DPPIV subfamily.

The protein resides in the cell membrane. Functionally, removes N-terminal dipeptides sequentially from polypeptides. Essential for control of distal tip cell migration. This chain is Dipeptidyl peptidase family member 1 (dpf-1), found in Caenorhabditis elegans.